Reading from the N-terminus, the 100-residue chain is Urease subunit gamma (100 aa).

It belongs to the urease gamma subunit family. As to quaternary structure, heterotrimer of UreA (gamma), UreB (beta) and UreC (alpha) subunits. Three heterotrimers associate to form the active enzyme.

Its subcellular location is the cytoplasm. The enzyme catalyses urea + 2 H2O + H(+) = hydrogencarbonate + 2 NH4(+). The protein operates within nitrogen metabolism; urea degradation; CO(2) and NH(3) from urea (urease route): step 1/1. The protein is Urease subunit gamma of Nitrosospira multiformis (strain ATCC 25196 / NCIMB 11849 / C 71).